Reading from the N-terminus, the 149-residue chain is Alpha-amylase/trypsin inhibitor CMb (149 aa).

The first 24 residues, 1–24, serve as a signal peptide directing secretion; it reads MASKSSCDLLLAAVLVSIFAAVAA. N-linked (GlcNAc...) asparagine glycosylation occurs at N124.

It belongs to the protease inhibitor I6 (cereal trypsin/alpha-amylase inhibitor) family. As to quaternary structure, heterotetramer of one CMa, one CMb and two CMd chains. Post-translationally, five disulfide bonds, which are essential for the inhibitor activity, are probably present. In terms of processing, exists both in a glycosylated and in an unglycosylated form. The glycosylated form is a potent allergen. As to expression, endosperm.

The protein resides in the secreted. Its function is as follows. Part of a complex with inhibitory activity, but CMb is inactive as a separate subunit. The protein is Alpha-amylase/trypsin inhibitor CMb (IAT2) of Hordeum vulgare (Barley).